Here is a 644-residue protein sequence, read N- to C-terminus: Replication protein E1 (644 aa).

Positions 86 to 88 (KRK) match the Nuclear localization signal motif. Residues 179–345 (CENVTLQEIS…LTVLQHSFND (167 aa)) are DNA-binding region. Positions 312 to 644 (LYWFRTAMSN…AGENTRSLRS (333 aa)) are required for E2 binding. One can recognise an SF3 helicase domain in the interval 444 to 594 (IEFTAFLGAF…FPFDENGNPV (151 aa)). 470-477 (GPANTGKS) contacts ATP. Lys-551 participates in a covalent cross-link: Glycyl lysine isopeptide (Lys-Gly) (interchain with G-Cter in SUMO).

This sequence belongs to the papillomaviridae E1 protein family. In terms of assembly, can form hexamers. Interacts with E2 protein; this interaction increases E1 DNA binding specificity. Interacts with host DNA polymerase subunit POLA2. Interacts with host single stranded DNA-binding protein RPA1. Interacts with host TOP1; this interaction stimulates the enzymatic activity of TOP1. In terms of processing, phosphorylated. Post-translationally, sumoylated.

It is found in the host nucleus. The catalysed reaction is Couples ATP hydrolysis with the unwinding of duplex DNA by translocating in the 3'-5' direction.. It carries out the reaction ATP + H2O = ADP + phosphate + H(+). Functionally, ATP-dependent DNA 3'-5' helicase required for initiation of viral DNA replication. It forms a complex with the viral E2 protein. The E1-E2 complex binds to the replication origin which contains binding sites for both proteins. During the initial step, a dimer of E1 interacts with a dimer of protein E2 leading to a complex that binds the viral origin of replication with high specificity. Then, a second dimer of E1 displaces the E2 dimer in an ATP-dependent manner to form the E1 tetramer. Following this, two E1 monomers are added to each half of the site, which results in the formation of two E1 trimers on the viral ori. Subsequently, two hexamers will be created. The double hexamer acts as a bi-directional helicase machinery and unwinds the viral DNA and then recruits the host DNA polymerase to start replication. In Human papillomavirus 33, this protein is Replication protein E1.